The following is a 449-amino-acid chain: PGL/p-HBAD biosynthesis rhamnosyltransferase (449 aa).

This sequence belongs to the glycosyltransferase 28 family.

Catalyzes the transfer of the first rhamnosyl residue on p-hydroxybenzoic acid or phenolphthiocerol derivatives to form, after O-methylation at position 2 of the sugar unit, mono-O-methyl-glycosyl-p-hydroxybenzoic acid derivative (p-HBAD I) and 2-O-methyl-rhamnosyl-phenolphthiocerol dimycocerosate (also called mycoside B) during p-hydroxybenzoic acid derivatives (p-HBAD) and glycosylated phenolphthiocerol dimycocerosates (PGL) biosynthesis. The polypeptide is PGL/p-HBAD biosynthesis rhamnosyltransferase (Mycobacterium bovis (strain BCG / Pasteur 1173P2)).